We begin with the raw amino-acid sequence, 321 residues long: GTP 3',8-cyclase (321 aa).

The 229-residue stretch at 5–233 (SFNRVIDYIR…QGSSKIYTLE (229 aa)) folds into the Radical SAM core domain. R14 provides a ligand contact to GTP. The [4Fe-4S] cluster site is built by C21 and C25. Position 27 (Y27) interacts with S-adenosyl-L-methionine. C28 is a [4Fe-4S] cluster binding site. R64 is a GTP binding site. G68 lines the S-adenosyl-L-methionine pocket. Residue S95 coordinates GTP. S119 serves as a coordination point for S-adenosyl-L-methionine. K155 is a binding site for GTP. M189 lines the S-adenosyl-L-methionine pocket. The [4Fe-4S] cluster site is built by C249 and C252. 254–256 (RIR) provides a ligand contact to GTP. Residue C266 coordinates [4Fe-4S] cluster.

Belongs to the radical SAM superfamily. MoaA family. In terms of assembly, monomer and homodimer. [4Fe-4S] cluster is required as a cofactor.

The catalysed reaction is GTP + AH2 + S-adenosyl-L-methionine = (8S)-3',8-cyclo-7,8-dihydroguanosine 5'-triphosphate + 5'-deoxyadenosine + L-methionine + A + H(+). Its pathway is cofactor biosynthesis; molybdopterin biosynthesis. In terms of biological role, catalyzes the cyclization of GTP to (8S)-3',8-cyclo-7,8-dihydroguanosine 5'-triphosphate. The protein is GTP 3',8-cyclase of Helicobacter pylori (strain J99 / ATCC 700824) (Campylobacter pylori J99).